Here is a 630-residue protein sequence, read N- to C-terminus: MPLTIEQLKQYNEKMAAKGEEDDAPAPVLLLDKYRVRVLPLTSIPFVMNHSSVSQLSLSSEDVLVVDFPSKGTGSGAGKAEKKMIFKKKIEPMEDSFEDKENVNEGGPLMTSFLTLEKLRKGMVGDVEIIGYECETSFFDANPIPLSDGVSLQRYIRLNCSEHFSPSISTLPVWISTTSSKFPSICWLAAGRTNRNVQFAAATRVLGHFNNENSERVVKQLNQACGTSQLNKYRAVYEEIRKIATENRPAPGEVTIDVRWSTKSTLVLLEHPDNAADCTIKIDLGWGDKRFFVDDEIFEQLFFVLNLADVLANPDNEVIFPMAPPANFDDLVQEMDALVEASSREDNVFVSNENFRGGDITDKVWNIVRKCNDVKQVTLLFRNFLQALAYGKIKSHAQERNKSHLASLIRISKSSEFKIPVLERLSTIDMMMEIGVESLRRRVIDIFSSQLLYPSDELEFILQTCENDLPAGNGAMNSAAISLLPITMALATANRIYELLNEKDHVILPDLTRRILQKYTASMIEKSRRGETETEYTFETTLPLLRMYKEGFMSKRPCIWTCENSNTVGANVQARVLTSLELQPSLEHINRLVNDSRPVWTATEEKPAMIKDLNADYTVVHTIFSYLPKM.

This sequence belongs to the ZWILCH family. In terms of assembly, component of the RZZ complex composed of rod-1, czw-1 and zwl-1. Interacts with the spindly-like protein spdl-1. Interacts with NDC80 complex component ndc-80.

It localises to the cytoplasm. The protein resides in the cell cortex. It is found in the chromosome. The protein localises to the centromere. Its subcellular location is the kinetochore. It localises to the cytoskeleton. The protein resides in the spindle. Essential component of the mitotic checkpoint, which prevents cells from prematurely exiting mitosis. Required for chromosome segregation, the assembly of the dynein-dynactin and mdf-1-mdf-2 complexes onto kinetochores and spindle pole separation. Its function related to the spindle assembly machinery and kinetochore-microtubule attachments likely depends on its association in the mitotic RZZ complex. The RZZ complex recruits the spindly-like protein spdl-1 to kinetochores. To prevent irregular chromosome segregation, the complex also inhibits the attachment of the kinetochore-associated NDC80 complex to microtubules. The recruitment of spdl-1 to kinetochores relieves this inhibition. Required for embryonic development. The polypeptide is Protein zwilch homolog (zwl-1) (Caenorhabditis elegans).